Consider the following 459-residue polypeptide: ATP synthase subunit beta (459 aa).

148–155 (GGAGVGKT) is a binding site for ATP.

Belongs to the ATPase alpha/beta chains family. F-type ATPases have 2 components, CF(1) - the catalytic core - and CF(0) - the membrane proton channel. CF(1) has five subunits: alpha(3), beta(3), gamma(1), delta(1), epsilon(1). CF(0) has three main subunits: a(1), b(2) and c(9-12). The alpha and beta chains form an alternating ring which encloses part of the gamma chain. CF(1) is attached to CF(0) by a central stalk formed by the gamma and epsilon chains, while a peripheral stalk is formed by the delta and b chains.

It localises to the cell inner membrane. The enzyme catalyses ATP + H2O + 4 H(+)(in) = ADP + phosphate + 5 H(+)(out). Produces ATP from ADP in the presence of a proton gradient across the membrane. The catalytic sites are hosted primarily by the beta subunits. In Ruthia magnifica subsp. Calyptogena magnifica, this protein is ATP synthase subunit beta.